The sequence spans 96 residues: Large ribosomal subunit protein eL14 (96 aa).

The protein belongs to the eukaryotic ribosomal protein eL14 family.

This chain is Large ribosomal subunit protein eL14, found in Saccharolobus solfataricus (strain ATCC 35092 / DSM 1617 / JCM 11322 / P2) (Sulfolobus solfataricus).